We begin with the raw amino-acid sequence, 97 residues long: uncharacterized protein (97 aa).

The interval 72 to 97 is disordered; it reads TVERKRSEHTNSRKKDPSAYTWSDVK. Over residues 73-88 the composition is skewed to basic and acidic residues; sequence VERKRSEHTNSRKKDP.

The protein belongs to the chlamydial CPn_0121/CT_031/TC_0300 family.

This is an uncharacterized protein from Chlamydia pneumoniae (Chlamydophila pneumoniae).